The chain runs to 427 residues: D-inositol 3-phosphate glycosyltransferase (427 aa).

Histidine 12 contacts 1D-myo-inositol 3-phosphate. UDP-N-acetyl-alpha-D-glucosamine is bound by residues 18–19 (QP) and glycine 26. 1D-myo-inositol 3-phosphate contacts are provided by residues 23-28 (DAGGMN), lysine 81, tyrosine 113, threonine 137, and arginine 157. The UDP-N-acetyl-alpha-D-glucosamine site is built by arginine 234, lysine 239, and arginine 297. Residues tyrosine 306, glutamine 307, and alanine 309 each coordinate Mg(2+). Positions 319 and 327 each coordinate UDP-N-acetyl-alpha-D-glucosamine. Mg(2+) is bound at residue threonine 333.

Belongs to the glycosyltransferase group 1 family. MshA subfamily. Homodimer.

The catalysed reaction is 1D-myo-inositol 3-phosphate + UDP-N-acetyl-alpha-D-glucosamine = 1D-myo-inositol 2-acetamido-2-deoxy-alpha-D-glucopyranoside 3-phosphate + UDP + H(+). Functionally, catalyzes the transfer of a N-acetyl-glucosamine moiety to 1D-myo-inositol 3-phosphate to produce 1D-myo-inositol 2-acetamido-2-deoxy-glucopyranoside 3-phosphate in the mycothiol biosynthesis pathway. This chain is D-inositol 3-phosphate glycosyltransferase, found in Corynebacterium diphtheriae (strain ATCC 700971 / NCTC 13129 / Biotype gravis).